A 340-amino-acid polypeptide reads, in one-letter code: Large ribosomal subunit protein uL10 (340 aa).

Residues 305–340 (APQPAEEKVEEAEEEEEEEEEASEEEALAGLGALFG) form a disordered region. The segment covering 312–331 (KVEEAEEEEEEEEEASEEEA) has biased composition (acidic residues).

Belongs to the universal ribosomal protein uL10 family. Part of the 50S ribosomal subunit. Forms part of the ribosomal stalk which helps the ribosome interact with GTP-bound translation factors. Forms a heptameric L10(L12)2(L12)2(L12)2 complex, where L10 forms an elongated spine to which the L12 dimers bind in a sequential fashion.

Forms part of the ribosomal stalk, playing a central role in the interaction of the ribosome with GTP-bound translation factors. This chain is Large ribosomal subunit protein uL10, found in Thermococcus gammatolerans (strain DSM 15229 / JCM 11827 / EJ3).